The following is a 624-amino-acid chain: Probable potassium transport system protein Kup (624 aa).

The next 12 membrane-spanning stretches (helical) occupy residues 13 to 33 (LALG…LYTM), 52 to 72 (ILSL…VLVI), 102 to 122 (WIIM…SLIT), 139 to 159 (PALH…LFAI), 170 to 190 (LFGP…AIGI), 208 to 228 (FFMT…LAIT), 249 to 269 (WFGF…ALLL), 291 to 311 (MVAL…SGAF), 339 to 359 (IYIP…VLGF), 368 to 388 (AYGI…ALLM), 399 to 419 (TLVA…ANAV), and 421 to 441 (IPEG…ILVT).

Belongs to the HAK/KUP transporter (TC 2.A.72) family.

The protein localises to the cell inner membrane. It carries out the reaction K(+)(in) + H(+)(in) = K(+)(out) + H(+)(out). Transport of potassium into the cell. Likely operates as a K(+):H(+) symporter. This chain is Probable potassium transport system protein Kup, found in Thiobacillus denitrificans (strain ATCC 25259 / T1).